A 206-amino-acid chain; its full sequence is 3-isopropylmalate dehydratase small subunit (206 aa).

This sequence belongs to the LeuD family. LeuD type 1 subfamily. In terms of assembly, heterodimer of LeuC and LeuD.

The catalysed reaction is (2R,3S)-3-isopropylmalate = (2S)-2-isopropylmalate. The protein operates within amino-acid biosynthesis; L-leucine biosynthesis; L-leucine from 3-methyl-2-oxobutanoate: step 2/4. Catalyzes the isomerization between 2-isopropylmalate and 3-isopropylmalate, via the formation of 2-isopropylmaleate. This Leptospira interrogans serogroup Icterohaemorrhagiae serovar copenhageni (strain Fiocruz L1-130) protein is 3-isopropylmalate dehydratase small subunit.